Consider the following 357-residue polypeptide: UDP-3-O-acylglucosamine N-acyltransferase (357 aa).

H258 acts as the Proton acceptor in catalysis.

It belongs to the transferase hexapeptide repeat family. LpxD subfamily. Homotrimer.

The enzyme catalyses a UDP-3-O-[(3R)-3-hydroxyacyl]-alpha-D-glucosamine + a (3R)-hydroxyacyl-[ACP] = a UDP-2-N,3-O-bis[(3R)-3-hydroxyacyl]-alpha-D-glucosamine + holo-[ACP] + H(+). It participates in bacterial outer membrane biogenesis; LPS lipid A biosynthesis. In terms of biological role, catalyzes the N-acylation of UDP-3-O-acylglucosamine using 3-hydroxyacyl-ACP as the acyl donor. Is involved in the biosynthesis of lipid A, a phosphorylated glycolipid that anchors the lipopolysaccharide to the outer membrane of the cell. The polypeptide is UDP-3-O-acylglucosamine N-acyltransferase (Azorhizobium caulinodans (strain ATCC 43989 / DSM 5975 / JCM 20966 / LMG 6465 / NBRC 14845 / NCIMB 13405 / ORS 571)).